The following is a 426-amino-acid chain: Glucose-6-phosphate isomerase (426 aa).

Catalysis depends on E282, which acts as the Proton donor. Residues H303 and K417 contribute to the active site.

Belongs to the GPI family.

It localises to the cytoplasm. It carries out the reaction alpha-D-glucose 6-phosphate = beta-D-fructose 6-phosphate. It participates in carbohydrate biosynthesis; gluconeogenesis. Its pathway is carbohydrate degradation; glycolysis; D-glyceraldehyde 3-phosphate and glycerone phosphate from D-glucose: step 2/4. Its function is as follows. Catalyzes the reversible isomerization of glucose-6-phosphate to fructose-6-phosphate. This chain is Glucose-6-phosphate isomerase, found in Onion yellows phytoplasma (strain OY-M).